We begin with the raw amino-acid sequence, 265 residues long: MWKIESFLLSKLFLCIALCTAYVAFSSAMMEPGLWLLSRPIVPLNRTSTVFGLTIVAIGLSALSSWLSKLTLNNFTSDDSWDWSQEIVVVTGASSGIGAEIVRLLAELSIKTFILDPVPPDNSVLKNGSVHYYKVDITKPKEVSAAAREIQVKFSSPTVLINNAGVGLAKNLLDENETERRHLMNVNLLSQFTTVQEFLPAMIEKNHGHIVTMASSASYISSPQIVSYAASKAALVGFHEGLGIELVKRYNAKKIRTTLVFAPLL.

Residues 6 to 26 (SFLLSKLFLCIALCTAYVAFS) traverse the membrane as a helical segment. A glycan (N-linked (GlcNAc...) asparagine) is linked at asparagine 45. The chain crosses the membrane as a helical span at residues 47–67 (TSTVFGLTIVAIGLSALSSWL). Asparagine 74 is a glycosylation site (N-linked (GlcNAc...) asparagine). Valine 89 contacts NADP(+). The N-linked (GlcNAc...) asparagine glycan is linked to asparagine 127. The NADP(+) site is built by aspartate 136 and asparagine 163. An N-linked (GlcNAc...) asparagine glycan is attached at asparagine 176. The active-site Proton donor is the serine 216. 2 residues coordinate NADP(+): tyrosine 228 and lysine 232. The active-site Proton acceptor is tyrosine 228. Catalysis depends on lysine 232, which acts as the Lowers pKa of active site Tyr.

This sequence belongs to the short-chain dehydrogenases/reductases (SDR) family.

Its subcellular location is the membrane. It catalyses the reaction a primary alcohol + NAD(+) = an aldehyde + NADH + H(+). The enzyme catalyses a secondary alcohol + NAD(+) = a ketone + NADH + H(+). The protein operates within mycotoxin biosynthesis. Its function is as follows. Dehydrogenase; part of the Tox1B locus, one of the 2 loci that mediate the biosynthesis of T-toxin, a family of linear polyketides 37 to 45 carbons in length, of which the major component is 41 carbons, and which leads to high virulence to maize. One of the PKSs (PKS1 or PKS2) could synthesize a precursor, used subsequently by the other PKS as starter unit, to add additional carbons. Variability in the length of the final carbon backbone C35-47 could be achieved by varying the number of condensation cycles, or use of different starter or extender units or might be due to decarboxylation of the penultimate product, catalyzed by DEC1. Additional proteins are required for the biosynthesis of T-toxin, including oxidoreductases RED1, RED2, RED3, LAM1 and OXI1, as well as esterase TOX9. The chain is Dehydrogenase RED2 from Cochliobolus heterostrophus (strain C4 / ATCC 48331 / race T) (Southern corn leaf blight fungus).